A 250-amino-acid chain; its full sequence is Proteasome subunit alpha type-7-like (250 aa).

A glycan (O-linked (GlcNAc) serine) is linked at Ser132.

It belongs to the peptidase T1A family. As to quaternary structure, the 26S proteasome consists of a 20S proteasome core and two 19S regulatory subunits. The 20S proteasome core is a barrel-shaped complex made of 28 subunits that are arranged in four stacked rings. The two outer rings are each formed by seven alpha subunits, and the two inner rings are formed by seven beta subunits. The proteolytic activity is exerted by three beta-subunits PSMB5, PSMB6 and PSMB7. PSMA7 interacts directly with the PSMG1-PSMG2 heterodimer which promotes 20S proteasome assembly. Interacts with HIF1A. Interacts with RAB7A. Interacts with PRKN. Interacts with ABL1 and ABL2. Interacts with EMAP2. Interacts with MAVS.

Its subcellular location is the cytoplasm. It localises to the nucleus. Functionally, component of the 20S core proteasome complex involved in the proteolytic degradation of most intracellular proteins. This complex plays numerous essential roles within the cell by associating with different regulatory particles. Associated with two 19S regulatory particles, forms the 26S proteasome and thus participates in the ATP-dependent degradation of ubiquitinated proteins. The 26S proteasome plays a key role in the maintenance of protein homeostasis by removing misfolded or damaged proteins that could impair cellular functions, and by removing proteins whose functions are no longer required. Associated with the PA200 or PA28, the 20S proteasome mediates ubiquitin-independent protein degradation. This type of proteolysis is required in several pathways including spermatogenesis (20S-PA200 complex) or generation of a subset of MHC class I-presented antigenic peptides (20S-PA28 complex). Inhibits the transactivation function of HIF-1A under both normoxic and hypoxia-mimicking conditions. The interaction with EMAP2 increases the proteasome-mediated HIF-1A degradation under the hypoxic conditions. Plays a role in hepatitis C virus internal ribosome entry site-mediated translation. Mediates nuclear translocation of the androgen receptor (AR) and thereby enhances androgen-mediated transactivation. Promotes MAVS degradation and thereby negatively regulates MAVS-mediated innate immune response. In Macaca fascicularis (Crab-eating macaque), this protein is Proteasome subunit alpha type-7-like (PSMA7L).